We begin with the raw amino-acid sequence, 715 residues long: MKTFSESHKTVFVVDHCPYMSESCRQHVEFDMLTKNRTQGIIPLAPISKSLWTCAVEASMEYCRIMYDIFPFRKLVNFIVSDSRSRTLNSWNREDQNLQELMAALAVIGPPNPRADPECCSILHGLVEAVESLCKITDFQHESRTALMGNADWVANRGRIICITNAKSDSHVQMLEDCVNETIHEHNKMAAGSDHLMQIQKCHLVLLHTYPVGEDSLVSDRPKKELSNVLVSEVHSVKAGRHLSTKLNQLVQLHFDLASTTITNIPMKPTLSVCDQEEQHANTSANYDVELLHHKEAHVDFIKSGEGYTGSSSIRENSLKETVTLKWCTPRTNSVELHYCTGAFRISPVDVNSRPSSCLTNFLLNGRSVLLEQPRKSGSKVISHMLSSHGGEIFLHVLSSSRSILEDPPSISEGCGGRVTDYRITDFGEFMRENRLMPFPEQSYQMDGGPEVPLERAKEQLERHTRYWPMIISQTTIFNMQAVVPLASVIVKESLSEEDLLNCQKTIYNLVDMERKNDPLPISTAGTRGKGPKRDEQYRIMWNELETLVRAHVSGSERHQRVMECLMACRSKPPEEEERKKRGRKREDKEEKGEKLNKDHEHDKKGQESERIKSVLDQEKEDLAEAEVIKDSPDSPEPPNKKPHIVIEDTGPAEKSKGPMSLLSLWSSRINTANSRKHQEFVGRLNSVNNKAELYQHLKEENGGEGVENGKASRQ.

Disordered stretches follow at residues 572-612 (KPPE…SERI) and 626-659 (AEVI…SKGP). The short motif at 581 to 591 (KRGRKREDKEE) is the Nuclear localization signal (NLS) element. Residues 658–703 (GPMSLLSLWSSRINTANSRKHQEFVGRLNSVNNKAELYQHLKEENG) are cleavage module binding motif (CMBM).

This sequence belongs to the Integrator subunit 13 family. Component of the Integrator complex, composed of core subunits INTS1, INTS2, INTS3, INTS4, INTS5, INTS6, INTS7, INTS8, INTS9/RC74, INTS10, INTS11/CPSF3L, INTS12, INTS13, INTS14 and INTS15. The core complex associates with protein phosphatase 2A subunits PPP2CA and PPP2R1A, to form the Integrator-PP2A (INTAC) complex. INTS13 is part of the tail subcomplex, composed of INTS10, INTS13, INTS14 and INTS15.

It is found in the nucleus. The protein resides in the cytoplasm. Functionally, component of the integrator complex, a multiprotein complex that terminates RNA polymerase II (Pol II) transcription in the promoter-proximal region of genes. The integrator complex provides a quality checkpoint during transcription elongation by driving premature transcription termination of transcripts that are unfavorably configured for transcriptional elongation: the complex terminates transcription by (1) catalyzing dephosphorylation of the C-terminal domain (CTD) of Pol II subunit POLR2A/RPB1 and SUPT5H/SPT5, (2) degrading the exiting nascent RNA transcript via endonuclease activity and (3) promoting the release of Pol II from bound DNA. The integrator complex is also involved in terminating the synthesis of non-coding Pol II transcripts, such as enhancer RNAs (eRNAs), small nuclear RNAs (snRNAs), telomerase RNAs and long non-coding RNAs (lncRNAs). Within the integrator complex, INTS13 is part of the integrator tail module and acts as a platform for the recruitment of transcription factors at promoters. Plays a role in gastrulation and early embryogenesis. The sequence is that of Integrator complex subunit 13 from Xenopus laevis (African clawed frog).